The following is a 503-amino-acid chain: ATP synthase subunit alpha (503 aa).

An ATP-binding site is contributed by 170 to 177 (GDKQTGKT).

Belongs to the ATPase alpha/beta chains family. In terms of assembly, F-type ATPases have 2 components, CF(1) - the catalytic core - and CF(0) - the membrane proton channel. CF(1) has five subunits: alpha(3), beta(3), gamma(1), delta(1), epsilon(1). CF(0) has three main subunits: a(1), b(2) and c(9-12). The alpha and beta chains form an alternating ring which encloses part of the gamma chain. CF(1) is attached to CF(0) by a central stalk formed by the gamma and epsilon chains, while a peripheral stalk is formed by the delta and b chains.

Its subcellular location is the cell inner membrane. It catalyses the reaction ATP + H2O + 4 H(+)(in) = ADP + phosphate + 5 H(+)(out). In terms of biological role, produces ATP from ADP in the presence of a proton gradient across the membrane. The alpha chain is a regulatory subunit. This is ATP synthase subunit alpha from Helicobacter pylori (strain HPAG1).